The following is a 942-amino-acid chain: MASVASCDSRPSSDELPGDPSSQEEDEDYDFEDRVSDSGSYSSASSDYDDLEPEWLDSVQKNGELFYLELSEDEEESLLPETPTVNHVRFSENEIIIEDDYKERKKYEPKLKQFTKILRRKRLLPKRCNKKNSNDNGPVSILKHQSNQKTGVIVQQRYKDVNVYVNPKKLTVIKAKEQLKLLEVLVGIIHQTKWSWRRTGKQGDGERLVVHGLLPGGSAMKSGQVLIGDVLVAVNDVDVTTENIERVLSCIPGPMQVKLTFENAYDVKRETSHPRQKKTQSNTSDLVKLLWGEEVEGIQQSGLNTPHIIMYLTLQLDSETSKEEQEILYHYPMSEASQKLKSVRGIFLTLCDMLENVTGTQVTSSSLLLNGKQIHVAYWKESDKLLLIGLPAEEVPLPRLRNMIENVIQTLKFMYGSLDSAFCQIENVPRLDHFFNLFFQRALQPAKLHSSASPSAQQYDASSAVLLDNLPGVRWLTLPLEIKMELDMALSDLEAADFAELSEDYYDMRRLYTILGSSLFYKGYLICSHLPKDDLIDIAVYCRHYCLLPLAAKQRIGQLIIWREVFPQHHLRPLADSSTEVFPEPEGRYFLLVVGLKHYMLCVLLEAGGCASKAIGSPGPDCVYVDQVKTTLHQLDGVDSRIDERLASSPVPCLSCADWFLTGSREKTDSLTTSPILSRLQGTSKVATSPTCRRTLFGDYSLKTRKPSPSCSSGGSDNGCEGGEDDGFSPHTTPDAVRKQRESQGSDGLEESGTLLKVTKKKSTLPNPFHLGNLKKDLPEKELEIYNTVKLTSGPENTLFHYVALETVQGIFITPTLEEVAQLSGSIHPQLIKNFHQCCLSIRAVFQQTLVEEKKKGLNSGDHSDSAKSVSSLNPVKEHGVLFECSPGNWTDQKKAPPVMAYWVVGRLFLHPKPQELYVCFHDSVTEIAIEIAFKLFFGLTL.

Residues 1-52 are disordered; it reads MASVASCDSRPSSDELPGDPSSQEEDEDYDFEDRVSDSGSYSSASSDYDDLE. Residues 22–31 are compositionally biased toward acidic residues; that stretch reads SQEEDEDYDF. Low complexity predominate over residues 37-46; sequence DSGSYSSASS. Residues 185–263 enclose the PDZ domain; the sequence is LVGIIHQTKW…PMQVKLTFEN (79 aa). A phosphoserine mark is found at S670 and S674. The tract at residues 704–754 is disordered; the sequence is TRKPSPSCSSGGSDNGCEGGEDDGFSPHTTPDAVRKQRESQGSDGLEESGT.

This sequence belongs to the inturned family. As to quaternary structure, component of the CPLANE (ciliogenesis and planar polarity effectors) complex, composed of INTU, FUZ and WDPCP. Interacts with CPLANE1. Interacts with NPHP4 and DAAM1; INTU is mediating the interaction between NPHP4 and DAAM1.

It localises to the cytoplasm. It is found in the cell surface. Its subcellular location is the cytoskeleton. The protein resides in the cilium basal body. The protein localises to the microtubule organizing center. It localises to the centrosome. It is found in the centriole. In terms of biological role, plays a key role in ciliogenesis and embryonic development. Regulator of cilia formation by controlling the organization of the apical actin cytoskeleton and the positioning of the basal bodies at the apical cell surface, which in turn is essential for the normal orientation of elongating ciliary microtubules. Plays a key role in definition of cell polarity via its role in ciliogenesis but not via conversion extension. Has an indirect effect on hedgehog signaling. Proposed to function as core component of the CPLANE (ciliogenesis and planar polarity effectors) complex involved in the recruitment of peripheral IFT-A proteins to basal bodies. Required for recruitment of CPLANE2 to the mother centriole. Binds phosphatidylinositol 3-phosphate with highest affinity, followed by phosphatidylinositol 4-phosphate and phosphatidylinositol 5-phosphate. This is Protein inturned (INTU) from Homo sapiens (Human).